The following is a 142-amino-acid chain: Thioredoxin-like protein YLS8 (142 aa).

It belongs to the DIM1 family. Expressed in roots, leaves, stems, cauline leaves and flowers.

This chain is Thioredoxin-like protein YLS8 (YLS8), found in Arabidopsis thaliana (Mouse-ear cress).